A 310-amino-acid polypeptide reads, in one-letter code: Phosphoribosylaminoimidazole-succinocarboxamide synthase (310 aa).

Belongs to the SAICAR synthetase family.

It carries out the reaction 5-amino-1-(5-phospho-D-ribosyl)imidazole-4-carboxylate + L-aspartate + ATP = (2S)-2-[5-amino-1-(5-phospho-beta-D-ribosyl)imidazole-4-carboxamido]succinate + ADP + phosphate + 2 H(+). It participates in purine metabolism; IMP biosynthesis via de novo pathway; 5-amino-1-(5-phospho-D-ribosyl)imidazole-4-carboxamide from 5-amino-1-(5-phospho-D-ribosyl)imidazole-4-carboxylate: step 1/2. This is Phosphoribosylaminoimidazole-succinocarboxamide synthase from Xanthomonas campestris pv. campestris (strain B100).